The chain runs to 318 residues: N-succinylornithine carbamoyltransferase (318 aa).

Carbamoyl phosphate-binding positions include 47 to 50, W75, and R110; that span reads SLRT. E142 contributes to the N(2)-succinyl-L-ornithine binding site. 147–150 contributes to the carbamoyl phosphate binding site; sequence HPLQ. Positions 176 and 236 each coordinate N(2)-succinyl-L-ornithine. 274-275 serves as a coordination point for carbamoyl phosphate; the sequence is CL. A N(2)-succinyl-L-ornithine-binding site is contributed by R278. R302 serves as a coordination point for carbamoyl phosphate.

Belongs to the aspartate/ornithine carbamoyltransferase superfamily. SOTCase family. In terms of assembly, homotrimer.

It carries out the reaction N(2)-succinyl-L-ornithine + carbamoyl phosphate = N(2)-succinyl-L-citrulline + phosphate + H(+). Its pathway is amino-acid biosynthesis; L-arginine biosynthesis. Functionally, catalyzes the transfer of the carbamoyl group from carbamoyl phosphate to the delta-amino group of N(2)-succinyl-L-ornithine to produce N(2)-succinyl-L-citrulline. Is essential for arginine biosynthesis. Has no activity with either L-ornithine or L-aspartate as substrate. Also has no detectable AOTCase activity, being unable to convert N(2)-acetyl-L-ornithine to N(2)-acetyl-L-citrulline. The protein is N-succinylornithine carbamoyltransferase of Bacteroides fragilis (strain 638R).